The sequence spans 548 residues: Cytochrome P450 monooxygenase lcsK (548 aa).

Transmembrane regions (helical) follow at residues 28–48 and 68–88; these read HAYP…LWAF and VLLF…RLFF. N-linked (GlcNAc...) asparagine glycosylation is found at asparagine 172, asparagine 223, asparagine 242, and asparagine 404. Cysteine 487 is a heme binding site.

The protein belongs to the cytochrome P450 family. Heme serves as cofactor.

The protein localises to the membrane. It functions in the pathway secondary metabolite biosynthesis. In terms of biological role, cytochrome P450 monooxygenase; part of the gene cluster that mediates the biosynthesis of the lipopeptide antibiotics leucinostatins that show extensive biological activities, including antimalarial, antiviral, antibacterial, antifungal, and antitumor activities, as well as phytotoxic. Leucinostatin A contains nine amino acid residues, including the unusual amino acid 4-methyl-L-proline (MePro), 2-amino-6-hydroxy-4-methyl-8-oxodecanoic acid (AHyMeOA), 3-hydroxyleucine (HyLeu), alpha-aminoisobutyric acid (AIB), beta-Ala, a 4-methylhex-2-enoic acid at the N-terminus as well as a N1,N1-dimethylpropane-1,2-diamine (DPD) at the C-terminus. The biosynthesis of leucinostatins is probably initiated with the assembly of 4-methylhex-2-enoic acid by a reducing PKS. Two reducing polyketide synthases, lcsB and lcsC, have been identified in the cluster and it is not clear which is the one that assembles 4-methylhex-2-enoic acid since both contain KS, AT, DH, cMT, ER, KR and ACP domains. The polyketide residue might be transferred to the NRPS lcsA, mediated by two additional enzymes, the acyl-CoA ligase lcsD and the thioesterase lcsE. The linear polyketide carboxylic acid, which is released from PKS, is converted to a CoA thioester by lcsD, and then lcsE hydrolyzes the thiol bond and shuttles the polyketide intermediate to lcsA. The C domain of the first module catalyzed the condensation of 4-methylhex-2-enoic acid and MePro carried by domain A1, followed by successive condensations of nine amino acids to trigger the elongation of the linear peptide. A5 and A6 domains of lcsA are proposed to incorporate leucine, A2 AHyMeOA, and A3 incorporates HyLeu. A4, A7 and A8 incorporate AIB. The AHyMeOA in leucinostatin A activated by the A2 might be produced by the second PKS (lcsB or lcsC) present within the cluster. The MePro is probably produced via leucine cyclization and may originate from a separate pathway, independent of the cluster. Another nonproteinogenic amino acid, beta-Ala, could be produced by an aspartic acid decarboxylase also localized outside of the cluster. Two candidates are VFPBJ_01400 and VFPBJ_10476. The final peptide scaffold may be released by the NAD(P)H-dependent thioester reductase (TE) at the C-terminal region of lcsA. Transamination of the lcsA product by the transaminase lcsP may produce DPD at the C-terminus. Further hydroxylation steps performed alternatively by the cytochrome P450 monooxygenases lcsI, lcsK and lcsN then yield the non-methylated leucinostatins precursor. It is also possible that leucines can be hydroxylated prior to their incorporation into the peptide. Varying extents of methylation then lead to the formation of leucinostatins A and B. The protein is Cytochrome P450 monooxygenase lcsK of Purpureocillium lilacinum (Paecilomyces lilacinus).